Reading from the N-terminus, the 447-residue chain is Glutamate--tRNA ligase 1 (447 aa).

The 'HIGH' region motif lies at 10-20 (PSPTGMLHVGN). The 'KMSKS' region motif lies at 240–244 (KISKR). Lys243 contacts ATP.

The protein belongs to the class-I aminoacyl-tRNA synthetase family. Glutamate--tRNA ligase type 1 subfamily. As to quaternary structure, monomer.

The protein resides in the cytoplasm. It catalyses the reaction tRNA(Glu) + L-glutamate + ATP = L-glutamyl-tRNA(Glu) + AMP + diphosphate. Its function is as follows. Catalyzes the attachment of glutamate to tRNA(Glu) in a two-step reaction: glutamate is first activated by ATP to form Glu-AMP and then transferred to the acceptor end of tRNA(Glu). The chain is Glutamate--tRNA ligase 1 from Rickettsia prowazekii (strain Madrid E).